We begin with the raw amino-acid sequence, 109 residues long: METTAIIRGVHISAQKTRLVADLIRGKSVAQALNILTFSPKKAAVILKKAVESAIANAEHNDGADIDELKVTTIFVDKAQSMKRFSARAKGRGNRIEKQTCHITVKVGA.

Belongs to the universal ribosomal protein uL22 family. Part of the 50S ribosomal subunit.

Functionally, this protein binds specifically to 23S rRNA; its binding is stimulated by other ribosomal proteins, e.g. L4, L17, and L20. It is important during the early stages of 50S assembly. It makes multiple contacts with different domains of the 23S rRNA in the assembled 50S subunit and ribosome. The globular domain of the protein is located near the polypeptide exit tunnel on the outside of the subunit, while an extended beta-hairpin is found that lines the wall of the exit tunnel in the center of the 70S ribosome. The polypeptide is Large ribosomal subunit protein uL22 (Bordetella avium (strain 197N)).